A 323-amino-acid polypeptide reads, in one-letter code: Ferrochelatase (323 aa).

Fe cation-binding residues include His-196 and Glu-277.

It belongs to the ferrochelatase family.

It localises to the cytoplasm. It catalyses the reaction heme b + 2 H(+) = protoporphyrin IX + Fe(2+). It participates in porphyrin-containing compound metabolism; protoheme biosynthesis; protoheme from protoporphyrin-IX: step 1/1. In terms of biological role, catalyzes the ferrous insertion into protoporphyrin IX. The sequence is that of Ferrochelatase from Haemophilus influenzae (strain ATCC 51907 / DSM 11121 / KW20 / Rd).